Reading from the N-terminus, the 229-residue chain is Transmembrane emp24 domain-containing protein 5 (229 aa).

The first 27 residues, 1–27, serve as a signal peptide directing secretion; sequence MGGRMWLPFPVLLLSALPAALLRGAAG. The Lumenal segment spans residues 28-196; sequence FTPSLDSDFT…IQESNFDRVN (169 aa). One can recognise a GOLD domain in the interval 45 to 126; sequence KECFYQPMPL…EKVIFFELIL (82 aa). A helical transmembrane segment spans residues 197-217; sequence FWSVVNLMVMVVVSAIQVYTL. Residues 218–229 lie on the Cytoplasmic side of the membrane; the sequence is KSLFEDKRKSRT.

This sequence belongs to the EMP24/GP25L family. Interacts with TMED9 and TMED10.

It is found in the endoplasmic reticulum membrane. It localises to the golgi apparatus. The protein localises to the cis-Golgi network membrane. Its subcellular location is the endoplasmic reticulum-Golgi intermediate compartment membrane. Potential role in vesicular protein trafficking, mainly in the early secretory pathway. Required for the maintenance of the Golgi apparatus; involved in protein exchange between Golgi stacks during assembly. Probably not required for COPI-vesicle-mediated retrograde transport. This is Transmembrane emp24 domain-containing protein 5 (Tmed5) from Mus musculus (Mouse).